A 225-amino-acid polypeptide reads, in one-letter code: Myelin-associated neurite-outgrowth inhibitor (225 aa).

At 1–58 the chain is on the cytoplasmic side; sequence MNPVYSPGSSGVPYANAKGIGYPAGFPMGYAAAAPAYSPNMYAGPNPAFQQELEHPAH. The chain crosses the membrane as a helical span at residues 59–75; that stretch reads VSSGVQMFMFGHAFSVA. The Extracellular portion of the chain corresponds to 76 to 173; that stretch reads RNGAIPSGYT…PAPIQSPRGN (98 aa). Residues 174–193 traverse the membrane as a helical segment; it reads GVAMGMVAGTTMAMSAGTLL. Over 194-225 the chain is Cytoplasmic; sequence TSHYPSPVAPQVTMPTYRPPGTPTYSYVPPQW.

Belongs to the FAM168 family.

Its subcellular location is the cytoplasm. The protein resides in the perinuclear region. The protein localises to the cell membrane. It localises to the cell projection. It is found in the axon. Inhibitor of neuronal axonal outgrowth. This is Myelin-associated neurite-outgrowth inhibitor (fam168b) from Xenopus laevis (African clawed frog).